The primary structure comprises 1208 residues: Calmodulin-binding transcription activator 2 (1208 aa).

Residues Arg-30 to Cys-160 constitute a DNA-binding region (CG-1). The Nuclear localization signal motif lies at Asn-78 to Lys-86. 3 disordered regions span residues Ile-269–Gly-328, Val-366–Ala-418, and Gln-437–Pro-507. A compositionally biased stretch (pro residues) spans Pro-275 to Leu-288. Low complexity-rich tracts occupy residues Ser-294–Ser-305 and Thr-319–Gly-328. Composition is skewed to pro residues over residues Ser-371–Ala-380 and Thr-464–Pro-476. Residues Asp-544–Arg-622 form the IPT/TIG domain. ANK repeat units follow at residues Arg-717–Leu-750, Phe-762–Ile-792, and Leu-796–Val-826. Disordered stretches follow at residues Val-826–Ile-881 and Asn-908–Pro-936. The segment covering Pro-829 to Ser-853 has biased composition (low complexity). IQ domains lie at Leu-1054 to Val-1083 and Met-1107 to Leu-1136. The segment at Tyr-1144–Phe-1166 is disordered.

This sequence belongs to the CAMTA family. In terms of assembly, may interact with calmodulin.

The protein localises to the nucleus. Its function is as follows. Transcription activator. May act as tumor suppressor. The sequence is that of Calmodulin-binding transcription activator 2 (Camta2) from Mus musculus (Mouse).